Here is a 532-residue protein sequence, read N- to C-terminus: Exopolysaccharide phosphotransferase CpsY (532 aa).

Belongs to the stealth family.

This chain is Exopolysaccharide phosphotransferase CpsY (cpsY), found in Mycobacterium bovis (strain ATCC BAA-935 / AF2122/97).